The sequence spans 134 residues: Arsenate reductase (134 aa).

Catalysis depends on nucleophile residues C11, C83, and C90. Disulfide bonds link C11-C83 and C83-C90.

It belongs to the low molecular weight phosphotyrosine protein phosphatase family. Thioredoxin-coupled ArsC subfamily.

It is found in the cytoplasm. It catalyses the reaction arsenate + [thioredoxin]-dithiol + H(+) = arsenite + [thioredoxin]-disulfide + H2O. In terms of biological role, catalyzes the reduction of arsenate [As(V)] to arsenite [As(III)]. The protein is Arsenate reductase of Bacillus cereus (strain G9842).